Here is a 396-residue protein sequence, read N- to C-terminus: S-adenosylmethionine synthase 3 (396 aa).

Residue Glu13 coordinates Mg(2+). His19 serves as a coordination point for ATP. K(+) is bound at residue Glu47. Glu60 and Gln103 together coordinate L-methionine. ATP contacts are provided by residues 171–173 (DGK), 239–242 (SGRF), Asp250, 256–257 (RK), Ala273, Lys277, and Lys281. Asp250 is a binding site for L-methionine. Lys281 contacts L-methionine.

This sequence belongs to the AdoMet synthase family. As to quaternary structure, homotetramer. Requires Mn(2+) as cofactor. The cofactor is Mg(2+). Co(2+) is required as a cofactor. It depends on K(+) as a cofactor. In terms of tissue distribution, expressed in roots, stems and leaves (at protein level).

The protein localises to the cytoplasm. It carries out the reaction L-methionine + ATP + H2O = S-adenosyl-L-methionine + phosphate + diphosphate. It participates in amino-acid biosynthesis; S-adenosyl-L-methionine biosynthesis; S-adenosyl-L-methionine from L-methionine: step 1/1. Catalyzes the formation of S-adenosylmethionine from methionine and ATP. The reaction comprises two steps that are both catalyzed by the same enzyme: formation of S-adenosylmethionine (AdoMet) and triphosphate, and subsequent hydrolysis of the triphosphate. May be involved in the synthesis of betain in response to abiotic stress such as high salinity. In Atriplex nummularia (Old man saltbush), this protein is S-adenosylmethionine synthase 3 (SAMS3).